Consider the following 208-residue polypeptide: Large ribosomal subunit protein uL4 (208 aa).

Residues 46-84 form a disordered region; that stretch reads QGTHKAKTRAEVRGGGRKPFRQKGTGNARQGSTRSPLMI. Residues 69 to 80 are compositionally biased toward polar residues; the sequence is GTGNARQGSTRS.

The protein belongs to the universal ribosomal protein uL4 family. Part of the 50S ribosomal subunit.

One of the primary rRNA binding proteins, this protein initially binds near the 5'-end of the 23S rRNA. It is important during the early stages of 50S assembly. It makes multiple contacts with different domains of the 23S rRNA in the assembled 50S subunit and ribosome. Its function is as follows. Forms part of the polypeptide exit tunnel. In Chlorobium limicola (strain DSM 245 / NBRC 103803 / 6330), this protein is Large ribosomal subunit protein uL4.